Consider the following 225-residue polypeptide: 2-C-methyl-D-erythritol 4-phosphate cytidylyltransferase (225 aa).

It belongs to the IspD/TarI cytidylyltransferase family. IspD subfamily.

It catalyses the reaction 2-C-methyl-D-erythritol 4-phosphate + CTP + H(+) = 4-CDP-2-C-methyl-D-erythritol + diphosphate. The protein operates within isoprenoid biosynthesis; isopentenyl diphosphate biosynthesis via DXP pathway; isopentenyl diphosphate from 1-deoxy-D-xylulose 5-phosphate: step 2/6. Its function is as follows. Catalyzes the formation of 4-diphosphocytidyl-2-C-methyl-D-erythritol from CTP and 2-C-methyl-D-erythritol 4-phosphate (MEP). This Cereibacter sphaeroides (strain ATCC 17023 / DSM 158 / JCM 6121 / CCUG 31486 / LMG 2827 / NBRC 12203 / NCIMB 8253 / ATH 2.4.1.) (Rhodobacter sphaeroides) protein is 2-C-methyl-D-erythritol 4-phosphate cytidylyltransferase.